We begin with the raw amino-acid sequence, 231 residues long: MLDREGFRPNVGIILLNAHNEVFWGKRLREHSWQFPQGGIKYGETPVQAMYRELHEETGLLPEHVKVIGRTRDWLRYEVPDKFIKREVRGHYRGQKQIWFLLRMVGRDCDICLRATDHPEFDAWRWNEYWVPLDCVIEFKRDVYQLALTELSRFLRRPQPRTERPGGHHHGQRYPRMASSVNAPPGASMASSMTVTTVTTAIAVESTLRATIESDCSSTEDPAVQAPGLRD.

The region spanning 6–149 (GFRPNVGIIL…KRDVYQLALT (144 aa)) is the Nudix hydrolase domain. Positions 38-59 (GGIKYGETPVQAMYRELHEETG) match the Nudix box motif. A disordered region spans residues 157–190 (RPQPRTERPGGHHHGQRYPRMASSVNAPPGASMA).

Belongs to the Nudix hydrolase family. RppH subfamily. The cofactor is a divalent metal cation.

Its function is as follows. Accelerates the degradation of transcripts by removing pyrophosphate from the 5'-end of triphosphorylated RNA, leading to a more labile monophosphorylated state that can stimulate subsequent ribonuclease cleavage. This Paraburkholderia phymatum (strain DSM 17167 / CIP 108236 / LMG 21445 / STM815) (Burkholderia phymatum) protein is RNA pyrophosphohydrolase.